Consider the following 452-residue polypeptide: Gamma-aminobutyric acid receptor subunit delta (452 aa).

A signal peptide spans 1–24; sequence MDAPARLLAPLLLLCAQQLRGTRA. The Extracellular segment spans residues 25 to 251; that stretch reads MNDIGDYVGS…HLRRNRGVYI (227 aa). N-linked (GlcNAc...) asparagine glycosylation is found at Asn103 and Asn106. Cysteines 164 and 178 form a disulfide. A helical transmembrane segment spans residues 252-271; that stretch reads IQSYMPSVLLVAMSWVSFWI. Residues 272–275 are Cytoplasmic-facing; it reads SQAA. The helical transmembrane segment at 276-298 threads the bilayer; the sequence is VPARVSLGITTVLTMTTLMVSAR. Over 299–308 the chain is Extracellular; the sequence is SSLPRASAIK. A helical membrane pass occupies residues 309 to 331; sequence ALDVYFWICYVFVFAALVEYAFA. Topologically, residues 332–426 are cytoplasmic; it reads HFNADYRKKQ…ARLRPIDADT (95 aa). Phosphoserine is present on Ser390. Residues 427–449 form a helical membrane-spanning segment; that stretch reads IDIYARAVFPAAFAAVNVIYWAA. The Extracellular portion of the chain corresponds to 450–452; it reads YAM.

It belongs to the ligand-gated ion channel (TC 1.A.9) family. Gamma-aminobutyric acid receptor (TC 1.A.9.5) subfamily. GABRD sub-subfamily. As to quaternary structure, heteropentamer, formed by a combination of alpha (GABRA1-6), beta (GABRB1-3), gamma (GABRG1-3), delta (GABRD), epsilon (GABRE), rho (GABRR1-3), pi (GABRP) and theta (GABRQ) chains, each subunit exhibiting distinct physiological and pharmacological properties.

Its subcellular location is the cell membrane. It catalyses the reaction chloride(in) = chloride(out). Delta subunit of the heteropentameric ligand-gated chloride channel gated by gamma-aminobutyric acid (GABA), a major inhibitory neurotransmitter in the brain. GABA-gated chloride channels, also named GABA(A) receptors (GABAAR), consist of five subunits arranged around a central pore and contain GABA active binding site(s) located at the alpha and beta subunit interface(s). When activated by GABA, GABAARs selectively allow the flow of chloride anions across the cell membrane down their electrochemical gradient. GABAARs containing delta/GABRD subunits are predominantly located in extrasynaptic or perisynaptic positions on hippocampus and cerebellar granule cells, and contribute to the tonic GABAergic inhibition. GABAAR containing alpha-4-beta-3-delta subunits can simultaneously bind GABA and histamine where histamine binds at the interface of two neighboring beta subunits, which may be involved in the regulation of sleep and wakefulness. This Homo sapiens (Human) protein is Gamma-aminobutyric acid receptor subunit delta.